Reading from the N-terminus, the 135-residue chain is UPF0102 protein RPC_0320 (135 aa).

It belongs to the UPF0102 family.

In Rhodopseudomonas palustris (strain BisB18), this protein is UPF0102 protein RPC_0320.